The following is a 430-amino-acid chain: Small ribosomal subunit protein uS9m (430 aa).

The N-terminal 34 residues, 1–34 (MLSRLFLRHSNLRFVTLVSSKSNSQIFSSFIRPL), are a transit peptide targeting the mitochondrion. Residues 32-97 (RPLSTNSSGG…GGEGKWPEEP (66 aa)) form a disordered region. The span at 39–48 (SGGGGNGDGN) shows a compositional bias: gly residues. The span at 68–79 (GPFSSDDSFGSS) shows a compositional bias: low complexity. The span at 80 to 91 (GVAGSGLPGGEG) shows a compositional bias: gly residues.

Belongs to the universal ribosomal protein uS9 family. Interacts (via C terminus) with PIA2. Component of the mitochondrial ribosome small subunit. Expressed in root tips, young leaves, flowers and siliques.

It is found in the mitochondrion. In terms of biological role, mitochondrial ribosomal protein required for central cell maturation. May work together with PIA2 in controlling female gametophyte development, possibly by regulating the expression of some mitochondrial proteins. This Arabidopsis thaliana (Mouse-ear cress) protein is Small ribosomal subunit protein uS9m.